Consider the following 282-residue polypeptide: Orotidine 5'-phosphate decarboxylase (282 aa).

Lys95 serves as the catalytic Proton donor.

It belongs to the OMP decarboxylase family. Type 2 subfamily.

The enzyme catalyses orotidine 5'-phosphate + H(+) = UMP + CO2. It participates in pyrimidine metabolism; UMP biosynthesis via de novo pathway; UMP from orotate: step 2/2. This Polaromonas naphthalenivorans (strain CJ2) protein is Orotidine 5'-phosphate decarboxylase.